We begin with the raw amino-acid sequence, 57 residues long: Protein CgkB (57 aa).

This Pseudoalteromonas carrageenovora (Alteromonas carrageenovora) protein is Protein CgkB (cgkB).